The sequence spans 91 residues: Putative transmembrane protein encoded by LINC00862 (91 aa).

A helical membrane pass occupies residues 49 to 69 (IMALILMPSLHCFGNILILLF).

The protein localises to the membrane. The sequence is that of Putative transmembrane protein encoded by LINC00862 (LINC00862) from Homo sapiens (Human).